The primary structure comprises 158 residues: N5-carboxyaminoimidazole ribonucleotide mutase (158 aa).

Substrate is bound by residues Ser-10, Asp-13, and Arg-40.

It belongs to the AIR carboxylase family. Class I subfamily.

The enzyme catalyses 5-carboxyamino-1-(5-phospho-D-ribosyl)imidazole + H(+) = 5-amino-1-(5-phospho-D-ribosyl)imidazole-4-carboxylate. It participates in purine metabolism; IMP biosynthesis via de novo pathway; 5-amino-1-(5-phospho-D-ribosyl)imidazole-4-carboxylate from 5-amino-1-(5-phospho-D-ribosyl)imidazole (N5-CAIR route): step 2/2. Catalyzes the conversion of N5-carboxyaminoimidazole ribonucleotide (N5-CAIR) to 4-carboxy-5-aminoimidazole ribonucleotide (CAIR). The chain is N5-carboxyaminoimidazole ribonucleotide mutase from Saccharolobus solfataricus (strain ATCC 35092 / DSM 1617 / JCM 11322 / P2) (Sulfolobus solfataricus).